Here is a 239-residue protein sequence, read N- to C-terminus: Geranylgeranylglyceryl phosphate synthase (239 aa).

K13 provides a ligand contact to sn-glycerol 1-phosphate. Mg(2+) is bound by residues D15 and T42. Sn-glycerol 1-phosphate is bound by residues 162–167 (YIEYSG), G192, and 212–213 (GD).

It belongs to the GGGP/HepGP synthase family. Group I subfamily. It depends on Mg(2+) as a cofactor.

Its subcellular location is the cytoplasm. The enzyme catalyses sn-glycerol 1-phosphate + (2E,6E,10E)-geranylgeranyl diphosphate = sn-3-O-(geranylgeranyl)glycerol 1-phosphate + diphosphate. It participates in membrane lipid metabolism; glycerophospholipid metabolism. In terms of biological role, prenyltransferase that catalyzes the transfer of the geranylgeranyl moiety of geranylgeranyl diphosphate (GGPP) to the C3 hydroxyl of sn-glycerol-1-phosphate (G1P). This reaction is the first ether-bond-formation step in the biosynthesis of archaeal membrane lipids. The chain is Geranylgeranylglyceryl phosphate synthase from Haloquadratum walsbyi (strain DSM 16790 / HBSQ001).